Consider the following 211-residue polypeptide: Ribosome maturation factor RimM (211 aa).

The region spanning 111–182 is the PRC barrel domain; sequence PDAWYDHQLV…TLVVTPPLGL (72 aa). Residues 184–211 form a disordered region; sequence EEIPDETPTAEPTPAEAAEPAPEGDDAR. Positions 189-204 are enriched in low complexity; sequence ETPTAEPTPAEAAEPA.

Belongs to the RimM family. In terms of assembly, binds ribosomal protein uS19.

Its subcellular location is the cytoplasm. Functionally, an accessory protein needed during the final step in the assembly of 30S ribosomal subunit, possibly for assembly of the head region. Essential for efficient processing of 16S rRNA. May be needed both before and after RbfA during the maturation of 16S rRNA. It has affinity for free ribosomal 30S subunits but not for 70S ribosomes. The protein is Ribosome maturation factor RimM of Clavibacter michiganensis subsp. michiganensis (strain NCPPB 382).